A 200-amino-acid chain; its full sequence is Intraflagellar transport protein 43 homolog (200 aa).

Disordered stretches follow at residues 56–76 and 175–200; these read KTGK…IAAP and ERID…SSKY. A compositionally biased stretch (basic and acidic residues) spans 175–192; sequence ERIDAKDQPSDSRSRNAR.

Belongs to the IFT43 family. As to quaternary structure, component of the IFT complex A (IFT-A) composed of at least che-11, daf-10, dyf-2, ift-139, ift-43 and ifta-1. As to expression, expressed in ciliated sensory neurons.

The protein resides in the cell projection. It is found in the cilium. In terms of biological role, as a component of IFT complex A (IFT-A), a complex required for retrograde ciliary transport and entry into cilia of G protein-coupled receptors (GPCRs), it is involved in ciliogenesis. In particular, may act redundantly with the intraflagellar transport protein ift-139 to regulate the transport of specific ciliary cargo proteins such as che-3 which are related to motility. The protein is Intraflagellar transport protein 43 homolog of Caenorhabditis elegans.